The primary structure comprises 89 residues: MNLPTVLCIIALILGVRSAKNGFFTKLGKPIVCDDINFVGNYCQTKCVKAGANNGFCCQQKCYCLGLNDYAPTLQVADSSEKACQAMSG.

A signal peptide spans 1–18 (MNLPTVLCIIALILGVRS). The LCN-type CS-alpha/beta domain maps to 20-85 (KNGFFTKLGK…VADSSEKACQ (66 aa)). Intrachain disulfides connect cysteine 33–cysteine 57, cysteine 43–cysteine 62, cysteine 47–cysteine 64, and cysteine 58–cysteine 84.

Belongs to the long (4 C-C) scorpion toxin superfamily. Sodium channel inhibitor family. Beta subfamily. Expressed by the venom gland.

It localises to the secreted. Binds voltage-independently at site-4 of sodium channels (Nav) and shift the voltage of activation toward more negative potentials thereby affecting sodium channel activation and promoting spontaneous and repetitive firing. This is Neurotoxin LmNaTx28 from Lychas mucronatus (Chinese swimming scorpion).